The primary structure comprises 281 residues: Phosphatidylglycerol--prolipoprotein diacylglyceryl transferase (281 aa).

4 helical membrane-spanning segments follow: residues 23–43, 71–91, 107–127, and 133–153; these read VGPLAVHWYGLGYVVGILFAW, FVIWAALGVVLGGRIGYVLFY, WDGGMSFHGGILGTTLAMILF, and ILVWSMFDTIAAGVPIGLGVV. Arg-154 contacts a 1,2-diacyl-sn-glycero-3-phospho-(1'-sn-glycerol). The next 3 membrane-spanning stretches (helical) occupy residues 189–209, 217–237, and 247–267; these read LYEAFLEGLVLFFVLFVLVWG, GFVAGAFVTGYGLSRIAVEFF, and LFGGWLTMGMVLSVPMVLLGL.

This sequence belongs to the Lgt family.

It is found in the cell inner membrane. It carries out the reaction L-cysteinyl-[prolipoprotein] + a 1,2-diacyl-sn-glycero-3-phospho-(1'-sn-glycerol) = an S-1,2-diacyl-sn-glyceryl-L-cysteinyl-[prolipoprotein] + sn-glycerol 1-phosphate + H(+). Its pathway is protein modification; lipoprotein biosynthesis (diacylglyceryl transfer). Functionally, catalyzes the transfer of the diacylglyceryl group from phosphatidylglycerol to the sulfhydryl group of the N-terminal cysteine of a prolipoprotein, the first step in the formation of mature lipoproteins. The polypeptide is Phosphatidylglycerol--prolipoprotein diacylglyceryl transferase (Brucella abortus (strain S19)).